The following is a 446-amino-acid chain: 3-phosphoshikimate 1-carboxyvinyltransferase (446 aa).

The segment at 1–20 is disordered; the sequence is MIMAKPLSSRRAAPLAGSAP. 3-phosphoshikimate-binding residues include Lys25, Ser26, and Arg30. Phosphoenolpyruvate is bound at residue Lys25. Phosphoenolpyruvate is bound by residues Gly98 and Arg126. The 3-phosphoshikimate site is built by Ser171, Gln173, Asp324, and Lys351. Gln173 is a phosphoenolpyruvate binding site. Asp324 functions as the Proton acceptor in the catalytic mechanism. Positions 355 and 399 each coordinate phosphoenolpyruvate.

Belongs to the EPSP synthase family. In terms of assembly, monomer.

It localises to the cytoplasm. It carries out the reaction 3-phosphoshikimate + phosphoenolpyruvate = 5-O-(1-carboxyvinyl)-3-phosphoshikimate + phosphate. It participates in metabolic intermediate biosynthesis; chorismate biosynthesis; chorismate from D-erythrose 4-phosphate and phosphoenolpyruvate: step 6/7. In terms of biological role, catalyzes the transfer of the enolpyruvyl moiety of phosphoenolpyruvate (PEP) to the 5-hydroxyl of shikimate-3-phosphate (S3P) to produce enolpyruvyl shikimate-3-phosphate and inorganic phosphate. The sequence is that of 3-phosphoshikimate 1-carboxyvinyltransferase from Paramagnetospirillum magneticum (strain ATCC 700264 / AMB-1) (Magnetospirillum magneticum).